The sequence spans 113 residues: U11-theraphotoxin-Hhn1k (113 aa).

The N-terminal stretch at 1–21 (MNTVRVTFLLVFVLAVSLGQA) is a signal peptide. A propeptide spanning residues 22–74 (DKDENRMEMQEKTEQGKSYLDFAENLLLQKLEELEAKLLEEDSEESRNSRQKR) is cleaved from the precursor. Residues 61 to 83 (EEDSEESRNSRQKRCIGEGVPCD) form a disordered region. Intrachain disulfides connect C75-C90, C82-C95, and C89-C110.

This sequence belongs to the neurotoxin 14 (magi-1) family. 01 (HNTX-16) subfamily. Expressed by the venom gland.

Its subcellular location is the secreted. Probable ion channel inhibitor. The sequence is that of U11-theraphotoxin-Hhn1k from Cyriopagopus hainanus (Chinese bird spider).